Reading from the N-terminus, the 199-residue chain is MAAPQPQAAAVSSASGVSGPGSAGGPGPQQQPQPTQLVGSAQSGLLQQQQQDFDPVQRYKMLIPQLKESLQTLMKVAAQNLIQNTNIDNGQKSSDAPLQRFDKCLEEFYALCDQLELCLRLAHECLSQSCDSAKHSPTLVPTATKPDAVQPDSLPYPQYLAVIKAQITCAKDIHTALLDCANKVTGKTTAPSTGPGGSL.

Low complexity predominate over residues 1–17 (MAAPQPQAAAVSSASGV). Positions 1 to 47 (MAAPQPQAAAVSSASGVSGPGSAGGPGPQQQPQPTQLVGSAQSGLLQ) are disordered. A2 carries the post-translational modification N-acetylalanine. Gly residues predominate over residues 18-27 (SGPGSAGGPG). A compositionally biased stretch (low complexity) spans 28-47 (PQQQPQPTQLVGSAQSGLLQ).

It belongs to the Mediator complex subunit 29 family. As to quaternary structure, component of the Mediator complex, which is composed of MED1, MED4, MED6, MED7, MED8, MED9, MED10, MED11, MED12, MED13, MED13L, MED14, MED15, MED16, MED17, MED18, MED19, MED20, MED21, MED22, MED23, MED24, MED25, MED26, MED27, MED29, MED30, MED31, CCNC, CDK8 and CDC2L6/CDK11. The MED12, MED13, CCNC and CDK8 subunits form a distinct module termed the CDK8 module. Mediator containing the CDK8 module is less active than Mediator lacking this module in supporting transcriptional activation. Individual preparations of the Mediator complex lacking one or more distinct subunits have been variously termed ARC, CRSP, DRIP, PC2, SMCC and TRAP. Associates with the MED18/MED20 heteromer.

The protein resides in the nucleus. Functionally, component of the Mediator complex, a coactivator involved in the regulated transcription of nearly all RNA polymerase II-dependent genes. Mediator functions as a bridge to convey information from gene-specific regulatory proteins to the basal RNA polymerase II transcription machinery. Mediator is recruited to promoters by direct interactions with regulatory proteins and serves as a scaffold for the assembly of a functional preinitiation complex with RNA polymerase II and the general transcription factors. This Mus musculus (Mouse) protein is Mediator of RNA polymerase II transcription subunit 29 (Med29).